A 145-amino-acid chain; its full sequence is Large ribosomal subunit protein bL19 (145 aa).

This sequence belongs to the bacterial ribosomal protein bL19 family.

Functionally, this protein is located at the 30S-50S ribosomal subunit interface and may play a role in the structure and function of the aminoacyl-tRNA binding site. The sequence is that of Large ribosomal subunit protein bL19 from Brucella abortus (strain S19).